Consider the following 515-residue polypeptide: 1-pyrroline-5-carboxylate dehydrogenase (515 aa).

Residues E286 and C320 contribute to the active site.

The protein belongs to the aldehyde dehydrogenase family. RocA subfamily.

It carries out the reaction L-glutamate 5-semialdehyde + NAD(+) + H2O = L-glutamate + NADH + 2 H(+). The protein operates within amino-acid degradation; L-proline degradation into L-glutamate; L-glutamate from L-proline: step 2/2. This chain is 1-pyrroline-5-carboxylate dehydrogenase, found in Oceanobacillus iheyensis (strain DSM 14371 / CIP 107618 / JCM 11309 / KCTC 3954 / HTE831).